The primary structure comprises 93 residues: UPF0298 protein GWCH70_0997 (93 aa).

The protein belongs to the UPF0298 family.

The protein localises to the cytoplasm. This Geobacillus sp. (strain WCH70) protein is UPF0298 protein GWCH70_0997.